The sequence spans 289 residues: Inorganic pyrophosphatase (289 aa).

An N-acetylserine modification is found at Ser2. Lys57 bears the N6-acetyllysine mark. The Mg(2+) site is built by Asp116, Asp121, and Asp153. Lys228 carries the N6-acetyllysine modification. Ser250 carries the post-translational modification Phosphoserine.

This sequence belongs to the PPase family. As to quaternary structure, homodimer. Mg(2+) serves as cofactor. Expressed ubiquitously.

The protein resides in the cytoplasm. The enzyme catalyses diphosphate + H2O = 2 phosphate + H(+). The polypeptide is Inorganic pyrophosphatase (PPA1) (Homo sapiens (Human)).